A 565-amino-acid chain; its full sequence is Sulfite reductase [NADPH] hemoprotein beta-component (565 aa).

4 residues coordinate [4Fe-4S] cluster: cysteine 429, cysteine 435, cysteine 474, and cysteine 478. Residue cysteine 478 participates in siroheme binding.

This sequence belongs to the nitrite and sulfite reductase 4Fe-4S domain family. Alpha(8)-beta(8). The alpha component is a flavoprotein, the beta component is a hemoprotein. Requires siroheme as cofactor. [4Fe-4S] cluster is required as a cofactor.

The enzyme catalyses hydrogen sulfide + 3 NADP(+) + 3 H2O = sulfite + 3 NADPH + 4 H(+). The protein operates within sulfur metabolism; hydrogen sulfide biosynthesis; hydrogen sulfide from sulfite (NADPH route): step 1/1. Functionally, component of the sulfite reductase complex that catalyzes the 6-electron reduction of sulfite to sulfide. This is one of several activities required for the biosynthesis of L-cysteine from sulfate. The polypeptide is Sulfite reductase [NADPH] hemoprotein beta-component (Shewanella pealeana (strain ATCC 700345 / ANG-SQ1)).